The chain runs to 535 residues: T-complex protein 1 subunit epsilon (535 aa).

Belongs to the TCP-1 chaperonin family. Heterooligomeric complex of about 850 to 900 kDa that forms two stacked rings, 12 to 16 nm in diameter.

It localises to the cytoplasm. Functionally, molecular chaperone; assists the folding of proteins upon ATP hydrolysis. Known to play a role, in vitro, in the folding of actin and tubulin. The chain is T-complex protein 1 subunit epsilon from Arabidopsis thaliana (Mouse-ear cress).